Here is a 50-residue protein sequence, read N- to C-terminus: Protein PndA (50 aa).

Residues Thr5–Arg25 traverse the membrane as a helical segment.

Belongs to the Hok/Gef family.

The protein resides in the cell inner membrane. In terms of biological role, toxic component of a type I toxin-antitoxin (TA) system. When expressed is involved in cellular Mg(2+) release and degradation of stable RNA. This Escherichia coli protein is Protein PndA (pndA).